The sequence spans 299 residues: Tyrosine recombinase XerC (299 aa).

The Core-binding (CB) domain occupies 2-88 (SALQPLIDTY…ALRSFLDYLV (87 aa)). Residues 109-289 (PLPKNVSVDD…DFQHLSKIYD (181 aa)) form the Tyr recombinase domain. Catalysis depends on residues arginine 148, lysine 172, histidine 241, arginine 244, and histidine 267. Tyrosine 276 acts as the O-(3'-phospho-DNA)-tyrosine intermediate in catalysis.

Belongs to the 'phage' integrase family. XerC subfamily. In terms of assembly, forms a cyclic heterotetrameric complex composed of two molecules of XerC and two molecules of XerD.

It localises to the cytoplasm. Its function is as follows. Site-specific tyrosine recombinase, which acts by catalyzing the cutting and rejoining of the recombining DNA molecules. The XerC-XerD complex is essential to convert dimers of the bacterial chromosome into monomers to permit their segregation at cell division. It also contributes to the segregational stability of plasmids. This is Tyrosine recombinase XerC from Psychromonas ingrahamii (strain DSM 17664 / CCUG 51855 / 37).